The following is a 237-amino-acid chain: Ribosomal RNA small subunit methyltransferase G (237 aa).

S-adenosyl-L-methionine-binding positions include glycine 78, phenylalanine 83, 129-130 (AE), and arginine 148.

This sequence belongs to the methyltransferase superfamily. RNA methyltransferase RsmG family.

The protein resides in the cytoplasm. Its function is as follows. Specifically methylates the N7 position of a guanine in 16S rRNA. In Streptococcus thermophilus (strain CNRZ 1066), this protein is Ribosomal RNA small subunit methyltransferase G.